The sequence spans 367 residues: tRNA-specific 2-thiouridylase MnmA 2 (367 aa).

ATP-binding positions include 10–17 (GMSGGVDS) and methionine 36. Positions 96–98 (NPD) are interaction with target base in tRNA. Cysteine 101 serves as the catalytic Nucleophile. Cysteine 101 and cysteine 197 form a disulfide bridge. An ATP-binding site is contributed by glycine 125. Residues 147–149 (KDQ) are interaction with tRNA. Cysteine 197 serves as the catalytic Cysteine persulfide intermediate. An interaction with tRNA region spans residues 314 to 315 (RY).

It belongs to the MnmA/TRMU family.

It localises to the cytoplasm. It carries out the reaction S-sulfanyl-L-cysteinyl-[protein] + uridine(34) in tRNA + AH2 + ATP = 2-thiouridine(34) in tRNA + L-cysteinyl-[protein] + A + AMP + diphosphate + H(+). Its function is as follows. Catalyzes the 2-thiolation of uridine at the wobble position (U34) of tRNA, leading to the formation of s(2)U34. This Aliarcobacter butzleri (strain RM4018) (Arcobacter butzleri) protein is tRNA-specific 2-thiouridylase MnmA 2.